A 261-amino-acid polypeptide reads, in one-letter code: Cytochrome c oxidase subunit 3 (261 aa).

Residues 1–15 (MAHQAHSYHMVDPSP) are Mitochondrial matrix-facing. Residues 16–34 (WPIFGAAAALLTTSGLIMW) form a helical membrane-spanning segment. The Mitochondrial intermembrane segment spans residues 35-40 (FHYSST). The helical transmembrane segment at 41-66 (TLLTMGLLSMLLVMLQWWRDVVREST) threads the bilayer. The Mitochondrial matrix portion of the chain corresponds to 67–72 (FQGHHT). A helical membrane pass occupies residues 73–105 (PTVQKGLRYGMILFITSEAFFFLGFFWAFFHSS). The Mitochondrial intermembrane segment spans residues 106–128 (LAPTPELGGQWPPTGVKPLNPLE). The chain crosses the membrane as a helical span at residues 129 to 152 (VPLLNTAILLASGVTVTWAHHSIT). Topologically, residues 153–155 (EGN) are mitochondrial matrix. A helical transmembrane segment spans residues 156–183 (RKQAIHALTLTILLGFYFTALQAMEYHE). Topologically, residues 184-190 (ASFSIAD) are mitochondrial intermembrane. Residues 191-223 (SVYGSTFFVATGFHGLHVIIGSSFLTVCLLRLI) form a helical membrane-spanning segment. Over 224 to 232 (KFHFTPNHH) the chain is Mitochondrial matrix. The helical transmembrane segment at 233 to 256 (FGFEAAAWYWHFVDIIWLFLYMSM) threads the bilayer. At 257–261 (YWWGS) the chain is on the mitochondrial intermembrane side.

Belongs to the cytochrome c oxidase subunit 3 family. As to quaternary structure, component of the cytochrome c oxidase (complex IV, CIV), a multisubunit enzyme composed of 14 subunits. The complex is composed of a catalytic core of 3 subunits MT-CO1, MT-CO2 and MT-CO3, encoded in the mitochondrial DNA, and 11 supernumerary subunits COX4I, COX5A, COX5B, COX6A, COX6B, COX6C, COX7A, COX7B, COX7C, COX8 and NDUFA4, which are encoded in the nuclear genome. The complex exists as a monomer or a dimer and forms supercomplexes (SCs) in the inner mitochondrial membrane with NADH-ubiquinone oxidoreductase (complex I, CI) and ubiquinol-cytochrome c oxidoreductase (cytochrome b-c1 complex, complex III, CIII), resulting in different assemblies (supercomplex SCI(1)III(2)IV(1) and megacomplex MCI(2)III(2)IV(2)).

The protein resides in the mitochondrion inner membrane. It catalyses the reaction 4 Fe(II)-[cytochrome c] + O2 + 8 H(+)(in) = 4 Fe(III)-[cytochrome c] + 2 H2O + 4 H(+)(out). In terms of biological role, component of the cytochrome c oxidase, the last enzyme in the mitochondrial electron transport chain which drives oxidative phosphorylation. The respiratory chain contains 3 multisubunit complexes succinate dehydrogenase (complex II, CII), ubiquinol-cytochrome c oxidoreductase (cytochrome b-c1 complex, complex III, CIII) and cytochrome c oxidase (complex IV, CIV), that cooperate to transfer electrons derived from NADH and succinate to molecular oxygen, creating an electrochemical gradient over the inner membrane that drives transmembrane transport and the ATP synthase. Cytochrome c oxidase is the component of the respiratory chain that catalyzes the reduction of oxygen to water. Electrons originating from reduced cytochrome c in the intermembrane space (IMS) are transferred via the dinuclear copper A center (CU(A)) of subunit 2 and heme A of subunit 1 to the active site in subunit 1, a binuclear center (BNC) formed by heme A3 and copper B (CU(B)). The BNC reduces molecular oxygen to 2 water molecules using 4 electrons from cytochrome c in the IMS and 4 protons from the mitochondrial matrix. In Gallus gallus (Chicken), this protein is Cytochrome c oxidase subunit 3 (MT-CO3).